Consider the following 424-residue polypeptide: MSYIIDRRLNAKKKSTVNRQRFLKRYRKHIKKAVTDAISRRSITDLEHGEEIHIPAEDMKESFFHHGQGGHAKRVLPGNQDFIGGDRIERPPSGGAGGSGSGASDSGKGEDEFVFQITQAEFLDFMFDELALPNMIKRQLLGSDEFKLHQAGFSNQGSPGQVDVVRSLKSAHARRIALTLSKRKKLKALEKQLHLLVAKEPVLKNQVEIEQLREKISTLKSRVKRVPWLDDFDLKYHLRAKEPAPQAKAVMFCIMDVSGSMNQATKEIAKRFFILLYLFIQRNYQRTEIVFIRHHTVAMEVDEQEFFYSRETGGTIVSSALKLMQQIIEQRYPLGDWNIYAAQASDGDNWNNDSAVCKEILCKALLPKLQYFSYIEITPNAHQLLWHSYQQVKANFPDTFAMEQVVDAAEIYTVFREIFHKQVI.

Positions proline 77–lysine 108 are disordered.

This sequence belongs to the UPF0229 family.

In Psychromonas ingrahamii (strain DSM 17664 / CCUG 51855 / 37), this protein is UPF0229 protein Ping_2705.